The chain runs to 191 residues: ATP-dependent Clp protease proteolytic subunit 1 (191 aa).

Residue Ser-91 is the Nucleophile of the active site. His-116 is an active-site residue.

It belongs to the peptidase S14 family. Fourteen ClpP subunits assemble into 2 heptameric rings which stack back to back to give a disk-like structure with a central cavity, resembling the structure of eukaryotic proteasomes.

Its subcellular location is the cytoplasm. It carries out the reaction Hydrolysis of proteins to small peptides in the presence of ATP and magnesium. alpha-casein is the usual test substrate. In the absence of ATP, only oligopeptides shorter than five residues are hydrolyzed (such as succinyl-Leu-Tyr-|-NHMec, and Leu-Tyr-Leu-|-Tyr-Trp, in which cleavage of the -Tyr-|-Leu- and -Tyr-|-Trp bonds also occurs).. In terms of biological role, cleaves peptides in various proteins in a process that requires ATP hydrolysis. Has a chymotrypsin-like activity. Plays a major role in the degradation of misfolded proteins. The sequence is that of ATP-dependent Clp protease proteolytic subunit 1 from Chlamydia pneumoniae (Chlamydophila pneumoniae).